The chain runs to 272 residues: Glutamate racemase (272 aa).

Residues 10–11 (DS) and 42–43 (YG) contribute to the substrate site. Cys74 serves as the catalytic Proton donor/acceptor. A substrate-binding site is contributed by 75–76 (NT). The Proton donor/acceptor role is filled by Cys185. Position 186–187 (186–187 (TH)) interacts with substrate.

This sequence belongs to the aspartate/glutamate racemases family.

It catalyses the reaction L-glutamate = D-glutamate. It participates in cell wall biogenesis; peptidoglycan biosynthesis. Functionally, provides the (R)-glutamate required for cell wall biosynthesis. This is Glutamate racemase from Bacillus pumilus (strain SAFR-032).